We begin with the raw amino-acid sequence, 914 residues long: Thyroid peroxidase (914 aa).

The first 31 residues, 1 to 31 (MRTLGAMAIMLVVMGTVIFLSFILRSRDILC), serve as a signal peptide directing secretion. The Extracellular portion of the chain corresponds to 32–834 (GKTMKSHVIS…TCIDSGRLPR (803 aa)). The N-linked (GlcNAc...) asparagine glycan is linked to asparagine 123. The cysteines at positions 136 and 152 are disulfide-linked. Aspartate 232 provides a ligand contact to heme b. The active-site Proton acceptor is the histidine 233. Residue aspartate 234 coordinates Ca(2+). Cystine bridges form between cysteine 253-cysteine 263 and cysteine 257-cysteine 278. N-linked (GlcNAc...) asparagine glycans are attached at residues asparagine 271 and asparagine 299. Positions 313, 315, 317, and 319 each coordinate Ca(2+). Asparagine 334 carries N-linked (GlcNAc...) asparagine glycosylation. Heme b is bound by residues glutamate 387 and histidine 482. 7 disulfides stabilise this stretch: cysteine 586/cysteine 643, cysteine 684/cysteine 709, cysteine 730/cysteine 770, cysteine 756/cysteine 782, cysteine 788/cysteine 802, cysteine 796/cysteine 811, and cysteine 813/cysteine 826. The N-linked (GlcNAc...) asparagine glycan is linked to asparagine 603. The 56-residue stretch at 728–783 (DKCVFPEEVDNGNFVHCEESGKLVLVYSCFHGYKLQGQEQVTCTQKGWDSEPPVCK) folds into the Sushi domain. In terms of domain architecture, EGF-like; calcium-binding spans 784–827 (DVNECADLTHPPCHPSAQCKNTKGSFQCVCTDPYVLGEDEKTCI). The chain crosses the membrane as a helical span at residues 835-859 (ASWVSIALGALLIGGLASLTWIVIC). The Cytoplasmic portion of the chain corresponds to 860 to 914 (RWTHADKKATLPITERVTTQSGCRKSQGRGISPHKAAAQDTGQEPASGSRVLLCE). The tract at residues 881 to 909 (GCRKSQGRGISPHKAAAQDTGQEPASGSR) is disordered.

Belongs to the peroxidase family. XPO subfamily. Interacts with DUOX1, DUOX2 and CYBA. It depends on Ca(2+) as a cofactor. Requires heme b as cofactor. In terms of processing, heme is covalently bound through a H(2)O(2)-dependent autocatalytic process. Heme insertion is important for the delivery of protein at the cell surface. Cleaved in its N-terminal part.

The protein resides in the membrane. The catalysed reaction is 2 iodide + H2O2 + 2 H(+) = diiodine + 2 H2O. It carries out the reaction [thyroglobulin]-L-tyrosine + iodide + H2O2 + H(+) = [thyroglobulin]-3-iodo-L-tyrosine + 2 H2O. The enzyme catalyses [thyroglobulin]-3-iodo-L-tyrosine + iodide + H2O2 + H(+) = [thyroglobulin]-3,5-diiodo-L-tyrosine + 2 H2O. It catalyses the reaction 2 [thyroglobulin]-3,5-diiodo-L-tyrosine + H2O2 = [thyroglobulin]-L-thyroxine + [thyroglobulin]-dehydroalanine + 2 H2O. The catalysed reaction is [thyroglobulin]-3-iodo-L-tyrosine + [thyroglobulin]-3,5-diiodo-L-tyrosine + H2O2 = [thyroglobulin]-3,3',5-triiodo-L-thyronine + [thyroglobulin]-dehydroalanine + 2 H2O. Its pathway is hormone biosynthesis; thyroid hormone biosynthesis. Iodination and coupling of the hormonogenic tyrosines in thyroglobulin to yield the thyroid hormones T(3) and T(4). This chain is Thyroid peroxidase (Tpo), found in Mus musculus (Mouse).